Here is a 382-residue protein sequence, read N- to C-terminus: Chaperone protein DnaJ (382 aa).

A J domain is found at 5 to 70 (DYYEVLGLQK…QKRAAYDQYG (66 aa)). The segment at 134–212 (GTTKDIQINT…CHGEGRVHKK (79 aa)) adopts a CR-type zinc-finger fold. Zn(2+) contacts are provided by cysteine 147, cysteine 150, cysteine 164, cysteine 167, cysteine 186, cysteine 189, cysteine 200, and cysteine 203. 4 CXXCXGXG motif repeats span residues 147–154 (CDSCGGSG), 164–171 (CPHCHGSG), 186–193 (CPTCHGSG), and 200–207 (CRNCHGEG).

This sequence belongs to the DnaJ family. As to quaternary structure, homodimer. The cofactor is Zn(2+).

The protein localises to the cytoplasm. Participates actively in the response to hyperosmotic and heat shock by preventing the aggregation of stress-denatured proteins and by disaggregating proteins, also in an autonomous, DnaK-independent fashion. Unfolded proteins bind initially to DnaJ; upon interaction with the DnaJ-bound protein, DnaK hydrolyzes its bound ATP, resulting in the formation of a stable complex. GrpE releases ADP from DnaK; ATP binding to DnaK triggers the release of the substrate protein, thus completing the reaction cycle. Several rounds of ATP-dependent interactions between DnaJ, DnaK and GrpE are required for fully efficient folding. Also involved, together with DnaK and GrpE, in the DNA replication of plasmids through activation of initiation proteins. This chain is Chaperone protein DnaJ, found in Haemophilus influenzae (strain ATCC 51907 / DSM 11121 / KW20 / Rd).